The chain runs to 298 residues: Tyrosine recombinase XerC (298 aa).

The Core-binding (CB) domain maps to 1–84 (MNHIQEAFLN…TLRTFYEYWM (84 aa)). One can recognise a Tyr recombinase domain in the interval 105–286 (YLPQFFYEEE…SNQQLRKVYL (182 aa)). Residues Arg145, Lys169, His238, Arg241, and His264 contribute to the active site. Residue Tyr273 is the O-(3'-phospho-DNA)-tyrosine intermediate of the active site.

This sequence belongs to the 'phage' integrase family. XerC subfamily. As to quaternary structure, forms a cyclic heterotetrameric complex composed of two molecules of XerC and two molecules of XerD.

The protein localises to the cytoplasm. Its function is as follows. Site-specific tyrosine recombinase, which acts by catalyzing the cutting and rejoining of the recombining DNA molecules. The XerC-XerD complex is essential to convert dimers of the bacterial chromosome into monomers to permit their segregation at cell division. It also contributes to the segregational stability of plasmids. The sequence is that of Tyrosine recombinase XerC from Staphylococcus aureus (strain JH1).